Reading from the N-terminus, the 170-residue chain is MSGLTHLDERGQARMVEVGGKEATRREAVARGEVSMRPETLELILGGKVPKGEVFGVARVAGIMAAKKTPELIPLCHPLMLTGIDVQFRPDPERSRVEIEARVRTTGQTGVEMEALTAVTVAALAIYDMCKAVDREMVIGAVRLVHKSGGKSGVFERKGEEAWTEMQGTE.

Substrate-binding positions include 75–77 (LCH) and 113–114 (ME). Asp128 is an active-site residue.

The protein belongs to the MoaC family. Homohexamer; trimer of dimers.

It catalyses the reaction (8S)-3',8-cyclo-7,8-dihydroguanosine 5'-triphosphate = cyclic pyranopterin phosphate + diphosphate. It functions in the pathway cofactor biosynthesis; molybdopterin biosynthesis. Catalyzes the conversion of (8S)-3',8-cyclo-7,8-dihydroguanosine 5'-triphosphate to cyclic pyranopterin monophosphate (cPMP). The protein is Cyclic pyranopterin monophosphate synthase of Pelotomaculum thermopropionicum (strain DSM 13744 / JCM 10971 / SI).